We begin with the raw amino-acid sequence, 664 residues long: Zinc finger protein 800 (664 aa).

A C2H2-type 1; degenerate zinc finger spans residues 69–91 (FECKLCRSLFRGLPNLITHKKFY). Residue Lys-132 forms a Glycyl lysine isopeptide (Lys-Gly) (interchain with G-Cter in SUMO2) linkage. Polar residues-rich tracts occupy residues 154–179 (IEVT…EQSK) and 207–224 (SDEQ…SDNS). Residues 154–224 (IEVTESSSTP…QADLETSDNS (71 aa)) are disordered. A C2H2-type 2 zinc finger spans residues 230–253 (LICCLCRKEFNSRRGVRRHIRKVH). Lys-279 participates in a covalent cross-link: Glycyl lysine isopeptide (Lys-Gly) (interchain with G-Cter in SUMO2). The C2H2-type 3 zinc finger occupies 287–310 (RSCPVCCKSFATKANVRRHFDEVH). Ser-317 carries the phosphoserine modification. Phosphothreonine is present on Thr-319. The segment at 328–349 (QPLFLDSISPKKSFKTRKQKSS) is disordered. Residue Ser-336 is modified to Phosphoserine. Positions 339 to 348 (KSFKTRKQKS) are enriched in basic residues. The segment at 357-382 (TACKCLLCKRKYSSQIMLKRHMQIVH) adopts a C2H2-type 4 zinc-finger fold. Residues 388 to 476 (GTNSKREKGP…GGQQKTRKPK (89 aa)) form a disordered region. Residue Lys-392 forms a Glycyl lysine isopeptide (Lys-Gly) (interchain with G-Cter in SUMO2) linkage. A Glycyl lysine isopeptide (Lys-Gly) (interchain with G-Cter in SUMO1); alternate cross-link involves residue Lys-409. Lys-409 participates in a covalent cross-link: Glycyl lysine isopeptide (Lys-Gly) (interchain with G-Cter in SUMO2); alternate. Over residues 416 to 436 (VESSPPSITHSPQNELKGTNH) the composition is skewed to polar residues. Ser-422, Ser-426, Ser-455, Ser-457, Ser-460, and Ser-462 each carry phosphoserine. The span at 458–470 (PKSTSPSAAGGQQ) shows a compositional bias: polar residues. Lys-476 is covalently cross-linked (Glycyl lysine isopeptide (Lys-Gly) (interchain with G-Cter in SUMO2)). 2 C2H2-type zinc fingers span residues 486–508 (LYCK…IELH) and 519–542 (YKCP…TVVH). Disordered regions lie at residues 574–599 (KRGP…PSKK) and 635–664 (HHKK…KALV). The span at 577–591 (PSRDEAKHSDSKHDG) shows a compositional bias: basic and acidic residues. Residue Lys-599 forms a Glycyl lysine isopeptide (Lys-Gly) (interchain with G-Cter in SUMO2) linkage. A C2H2-type 7 zinc finger spans residues 618–640 (HRCNKCGKAFAKKTYLEHHKKTH). The span at 653 to 664 (TKGRSTRSKALV) shows a compositional bias: basic residues.

It belongs to the krueppel C2H2-type zinc-finger protein family.

It is found in the nucleus. May be involved in transcriptional regulation. In Homo sapiens (Human), this protein is Zinc finger protein 800 (ZNF800).